A 702-amino-acid chain; its full sequence is Polyribonucleotide nucleotidyltransferase (702 aa).

Mg(2+) contacts are provided by D487 and D493. The KH domain occupies P554–I613. In terms of domain architecture, S1 motif spans G623–K691.

Belongs to the polyribonucleotide nucleotidyltransferase family. In terms of assembly, component of the RNA degradosome, which is a multiprotein complex involved in RNA processing and mRNA degradation. The cofactor is Mg(2+).

It is found in the cytoplasm. It catalyses the reaction RNA(n+1) + phosphate = RNA(n) + a ribonucleoside 5'-diphosphate. Its function is as follows. Involved in mRNA degradation. Catalyzes the phosphorolysis of single-stranded polyribonucleotides processively in the 3'- to 5'-direction. In Stenotrophomonas maltophilia (strain R551-3), this protein is Polyribonucleotide nucleotidyltransferase.